The primary structure comprises 266 residues: Type III pantothenate kinase (266 aa).

An ATP-binding site is contributed by 11-18 (DIGNTSTV). 111 to 114 (GADR) serves as a coordination point for substrate. The active-site Proton acceptor is Asp-113. Position 135 (Asp-135) interacts with K(+). Thr-138 is a binding site for ATP. Thr-190 contributes to the substrate binding site.

Belongs to the type III pantothenate kinase family. As to quaternary structure, homodimer. It depends on NH4(+) as a cofactor. The cofactor is K(+).

The protein localises to the cytoplasm. The enzyme catalyses (R)-pantothenate + ATP = (R)-4'-phosphopantothenate + ADP + H(+). The protein operates within cofactor biosynthesis; coenzyme A biosynthesis; CoA from (R)-pantothenate: step 1/5. In terms of biological role, catalyzes the phosphorylation of pantothenate (Pan), the first step in CoA biosynthesis. The polypeptide is Type III pantothenate kinase (Deinococcus geothermalis (strain DSM 11300 / CIP 105573 / AG-3a)).